The sequence spans 601 residues: Potassium-transporting ATPase potassium-binding subunit (601 aa).

Helical transmembrane passes span 6–26, 65–85, 136–156, 179–199, 283–303, 313–333, 367–387, 397–417, 419–439, 458–478, 524–544, and 566–586; these read IMLL…LGLF, SYAI…YAVQ, ALTG…FALI, LYIL…QGVI, FSNF…CFTF, GWAV…IVMT, FGIS…CGAV, MGGF…GGVG, GLYG…LMIG, SIAI…AVLV, MLAI…LAIA, and LFVA…YVPA.

It belongs to the KdpA family. The system is composed of three essential subunits: KdpA, KdpB and KdpC.

It is found in the cell inner membrane. Functionally, part of the high-affinity ATP-driven potassium transport (or Kdp) system, which catalyzes the hydrolysis of ATP coupled with the electrogenic transport of potassium into the cytoplasm. This subunit binds the periplasmic potassium ions and delivers the ions to the membrane domain of KdpB through an intramembrane tunnel. This Herminiimonas arsenicoxydans protein is Potassium-transporting ATPase potassium-binding subunit.